Here is a 649-residue protein sequence, read N- to C-terminus: Transcription factor E2-alpha (649 aa).

Disordered stretches follow at residues 37–107, 132–207, 296–325, and 339–376; these read RPAS…SERN, GLSS…AKTP, TYSG…SSSG, and DHSS…ALSP. Over residues 57–71 the composition is skewed to polar residues; the sequence is SESWGNSEQNSSSFD. A compositionally biased stretch (low complexity) spans 132–148; the sequence is GLSSPGPLSPSGVKSSS. A phosphoserine mark is found at S135 and S140. The Nuclear localization signal signature appears at 171-177; that stretch reads PKKVRKV. Residues 339–352 show a composition bias toward low complexity; it reads DHSSNNFSPSPSTP. T351 is subject to Phosphothreonine. S355 carries the post-translational modification Phosphoserine. Residue R367 is modified to Omega-N-methylarginine. Position 375 is a phosphoserine (S375). The interval 385-420 is leucine-zipper; sequence LSKMEDRLDEAIHVLRSHAVGTASELHGLLPGHSTL. The segment at 435 to 547 is disordered; it reads AGLVSGSHPE…KAEREKERRV (113 aa). The span at 459 to 477 shows a compositional bias: low complexity; that stretch reads SLPSQPSSLPDLSQRPPDS. K494 participates in a covalent cross-link: Glycyl lysine isopeptide (Lys-Gly) (interchain with G-Cter in SUMO2). The residue at position 524 (S524) is a Phosphoserine. At D526 the chain carries Phosphothreonine. Residues 537–547 show a composition bias toward basic and acidic residues; the sequence is QKAEREKERRV. One can recognise a bHLH domain in the interval 544–597; that stretch reads ERRVANNARERLRVRDINEAFKELGRMCQLHLSTEKPQTKLLILHQAVAVILSL. K620 is covalently cross-linked (Glycyl lysine isopeptide (Lys-Gly) (interchain with G-Cter in SUMO2)).

As to quaternary structure, homodimer. Heterodimer; efficient DNA binding requires dimerization with another bHLH protein. Forms a heterodimer with TWIST1 and TWIST2. Forms a heterodimer with NEUROD1; the heterodimer is inhibited in presence of ID2, but not NR0B2, to E-box element. Forms a heterodimer with TCF15; the heterodimer binds E-box element. Forms a heterodimer with MYOG; heterodimerization enhances MYOG DNA-binding and transcriptional activities. Forms a heterodimer with ATOH8; repress transcription of TCF3 and TCF3-NEUROG3 dimer-induced transactivation of E box-dependent promoters. Component of a nuclear TAL-1 complex composed at least of CBFA2T3, LDB1, TAL1 and TCF3. Interacts with NEUROD2. Interacts with EP300. Interacts with PTF1A, TGFB1I1. Interacts with UBE2I. Interacts with BHLHA9. Interacts with ASB2; the interaction is mediated by SKP2 and targets TCF3 for Notch-induced proteasomal degradation. Interacts with transcription factor ASCL5/AmeloD. Interacts with RALGAPA1. Interacts with FIGLA. In terms of assembly, forms a heterodimer with ATOH7; required for ATOH7 DNA-binding. In terms of processing, phosphorylated following NGF stimulation. Post-translationally, undergoes Notch-induced ubiquitination and subsequent proteasomal degradation which is mediated by ASB1 or ASB2, the substrate-recognition components of probable ECS E3 ubiquitin-protein ligase complexes.

Its subcellular location is the nucleus. Transcriptional regulator involved in the initiation of neuronal differentiation and mesenchymal to epithelial transition. Heterodimers between TCF3 and tissue-specific basic helix-loop-helix (bHLH) proteins play major roles in determining tissue-specific cell fate during embryogenesis, like muscle or early B-cell differentiation. Together with TCF15, required for the mesenchymal to epithelial transition. Dimers bind DNA on E-box motifs: 5'-CANNTG-3'. Binds to the kappa-E2 site in the kappa immunoglobulin gene enhancer. Binds to the consensus sequence CAC/GCTGT/C present, in the chymotrypsin, insulin, AP-4, and several other gene enhancer motifs. Its function is as follows. Facilitates ATOH7 binding to DNA at the consensus sequence 5'-CAGGTG-3', and positively regulates transcriptional activity. The protein is Transcription factor E2-alpha (Tcf3) of Rattus norvegicus (Rat).